Here is a 92-residue protein sequence, read N- to C-terminus: UPF0473 protein OB2006 (92 aa).

The protein belongs to the UPF0473 family.

This chain is UPF0473 protein OB2006, found in Oceanobacillus iheyensis (strain DSM 14371 / CIP 107618 / JCM 11309 / KCTC 3954 / HTE831).